Here is a 394-residue protein sequence, read N- to C-terminus: MNKKSIRDVEVKGKKVFVRVDFNVPLNENREITDDTRIRAALPTLQYLREQGAKLIVASHLGRPKGQFNEKYSLKPVAKRLAELLGIEVKMAPDVVGPEVEKMAGELRPGEVLLLENVRFYPEEEKNDPEFARKLARLAEIFVSDAFGAAHRAHASTAGIASYLPAVAGFLMEKEINFLSRALNNPERPFVAIIGGAKVSDKIGVIENLLGKVDVLLIGGGMANTFLKAMGYETGKSLVEEDKVNLAGELMNKAKEVGVKLLLPSDVVVAPRIEAGVPSKIVAVDSIPAEEMALDIGEKTAKHFREEILKAKTVVWNGPMGVFEVEPFDRGTVAVAEAVAESGALSVVGGGDSVAAVEKAGVADKITHISTGGGASLEFLEGKKLPGVEVLNDK.

Substrate is bound by residues 21-23, R37, 60-63, R119, and R152; these read DFN and HLGR. ATP contacts are provided by residues K202, E324, and 350–353; that span reads GGDS.

The protein belongs to the phosphoglycerate kinase family. As to quaternary structure, monomer.

It localises to the cytoplasm. It carries out the reaction (2R)-3-phosphoglycerate + ATP = (2R)-3-phospho-glyceroyl phosphate + ADP. It participates in carbohydrate degradation; glycolysis; pyruvate from D-glyceraldehyde 3-phosphate: step 2/5. This is Phosphoglycerate kinase from Carboxydothermus hydrogenoformans (strain ATCC BAA-161 / DSM 6008 / Z-2901).